A 285-amino-acid polypeptide reads, in one-letter code: 2,3,4,5-tetrahydropyridine-2,6-dicarboxylate N-succinyltransferase (285 aa).

The substrate site is built by Arg111 and Asp148.

This sequence belongs to the transferase hexapeptide repeat family. In terms of assembly, homotrimer.

The protein resides in the cytoplasm. The catalysed reaction is (S)-2,3,4,5-tetrahydrodipicolinate + succinyl-CoA + H2O = (S)-2-succinylamino-6-oxoheptanedioate + CoA. It functions in the pathway amino-acid biosynthesis; L-lysine biosynthesis via DAP pathway; LL-2,6-diaminopimelate from (S)-tetrahydrodipicolinate (succinylase route): step 1/3. In Rhizobium meliloti (strain 1021) (Ensifer meliloti), this protein is 2,3,4,5-tetrahydropyridine-2,6-dicarboxylate N-succinyltransferase.